The sequence spans 62 residues: Toxin Tb2 (62 aa).

The 62-residue stretch at 1–62 (KEGYAMDHEG…KVWDYATNKC (62 aa)) folds into the LCN-type CS-alpha/beta domain. Disulfide bonds link cysteine 11-cysteine 62, cysteine 15-cysteine 38, cysteine 23-cysteine 43, and cysteine 27-cysteine 45. Cysteine 62 carries the cysteine amide modification.

This sequence belongs to the long (4 C-C) scorpion toxin superfamily. Sodium channel inhibitor family. Beta subfamily. In terms of tissue distribution, expressed by the venom gland.

It is found in the secreted. Functionally, beta toxins bind voltage-independently at site-4 of sodium channels (Nav) and shift the voltage of activation toward more negative potentials thereby affecting sodium channel activation and promoting spontaneous and repetitive firing. This toxin is active on mammals. The protein is Toxin Tb2 of Tityus bahiensis (Brazilian scorpion).